Consider the following 155-residue polypeptide: Interferon gamma (155 aa).

Positions 1 to 22 are cleaved as a signal peptide; the sequence is MNATHCILALQLFLMAVSGCYC. Asn38 and Asn90 each carry an N-linked (GlcNAc...) asparagine glycan.

Belongs to the type II (or gamma) interferon family. As to quaternary structure, homodimer. Interacts with IFNGR1 (via extracellular domain); this interaction promotes IFNGR1 dimerization. As to expression, released primarily from activated T lymphocytes.

Its subcellular location is the secreted. Type II interferon produced by immune cells such as T-cells and NK cells that plays crucial roles in antimicrobial, antiviral, and antitumor responses by activating effector immune cells and enhancing antigen presentation. Primarily signals through the JAK-STAT pathway after interaction with its receptor IFNGR1 to affect gene regulation. Upon IFNG binding, IFNGR1 intracellular domain opens out to allow association of downstream signaling components JAK2, JAK1 and STAT1, leading to STAT1 activation, nuclear translocation and transcription of IFNG-regulated genes. Many of the induced genes are transcription factors such as IRF1 that are able to further drive regulation of a next wave of transcription. Plays a role in class I antigen presentation pathway by inducing a replacement of catalytic proteasome subunits with immunoproteasome subunits. In turn, increases the quantity, quality, and repertoire of peptides for class I MHC loading. Increases the efficiency of peptide generation also by inducing the expression of activator PA28 that associates with the proteasome and alters its proteolytic cleavage preference. Up-regulates as well MHC II complexes on the cell surface by promoting expression of several key molecules such as cathepsins B/CTSB, H/CTSH, and L/CTSL. Participates in the regulation of hematopoietic stem cells during development and under homeostatic conditions by affecting their development, quiescence, and differentiation. The sequence is that of Interferon gamma (Ifng) from Mus musculus (Mouse).